Here is a 141-residue protein sequence, read N- to C-terminus: Nucleoside diphosphate kinase (141 aa).

The ATP site is built by lysine 11, phenylalanine 59, arginine 87, threonine 93, arginine 104, and asparagine 114. Histidine 117 acts as the Pros-phosphohistidine intermediate in catalysis.

It belongs to the NDK family. In terms of assembly, homotetramer. It depends on Mg(2+) as a cofactor.

Its subcellular location is the cytoplasm. It catalyses the reaction a 2'-deoxyribonucleoside 5'-diphosphate + ATP = a 2'-deoxyribonucleoside 5'-triphosphate + ADP. The enzyme catalyses a ribonucleoside 5'-diphosphate + ATP = a ribonucleoside 5'-triphosphate + ADP. Functionally, major role in the synthesis of nucleoside triphosphates other than ATP. The ATP gamma phosphate is transferred to the NDP beta phosphate via a ping-pong mechanism, using a phosphorylated active-site intermediate. In Janthinobacterium sp. (strain Marseille) (Minibacterium massiliensis), this protein is Nucleoside diphosphate kinase.